We begin with the raw amino-acid sequence, 236 residues long: Octanoyltransferase (236 aa).

The region spanning 36–220 is the BPL/LPL catalytic domain; sequence DQVPDTVLLL…HLAAVLGASS (185 aa). Residues 76–83, 150–152, and 163–165 contribute to the substrate site; these read RGGKITWH, AIG, and GFA. C181 acts as the Acyl-thioester intermediate in catalysis.

It belongs to the LipB family.

The protein localises to the cytoplasm. The catalysed reaction is octanoyl-[ACP] + L-lysyl-[protein] = N(6)-octanoyl-L-lysyl-[protein] + holo-[ACP] + H(+). It participates in protein modification; protein lipoylation via endogenous pathway; protein N(6)-(lipoyl)lysine from octanoyl-[acyl-carrier-protein]: step 1/2. Functionally, catalyzes the transfer of endogenously produced octanoic acid from octanoyl-acyl-carrier-protein onto the lipoyl domains of lipoate-dependent enzymes. Lipoyl-ACP can also act as a substrate although octanoyl-ACP is likely to be the physiological substrate. The sequence is that of Octanoyltransferase from Thermobifida fusca (strain YX).